The following is a 316-amino-acid chain: Exonuclease DPD1, chloroplastic/mitochondrial (316 aa).

The transit peptide at 1–63 directs the protein to the chloroplast and mitochondrion; it reads MCISISQVSR…NVSTTTQGSR (63 aa). Positions 112–282 constitute an Exonuclease domain; that stretch reads IVSDLETTGL…SDVLLLSKVF (171 aa). Mg(2+)-binding residues include aspartate 115 and glutamate 117. Catalysis depends on histidine 269, which acts as the Proton donor/acceptor. Residue aspartate 274 coordinates Mg(2+).

Belongs to the exonuclease superfamily. TREX family. Requires Mg(2+) as cofactor. As to expression, highly expressed in mature pollen grains. Detected in flowers, senescing leaves and roots.

The protein localises to the plastid. It localises to the chloroplast. The protein resides in the mitochondrion. With respect to regulation, inhibited by free nucleotide diphosphates (NDPs). Exonuclease required for organelle DNA degradation during pollen development. Plays non-essential roles in maternal inheritance. May be part of the DNA salvage machinery. This is Exonuclease DPD1, chloroplastic/mitochondrial from Arabidopsis thaliana (Mouse-ear cress).